The sequence spans 140 residues: UPF0179 protein Msp_0996 (140 aa).

This sequence belongs to the UPF0179 family.

The protein is UPF0179 protein Msp_0996 of Methanosphaera stadtmanae (strain ATCC 43021 / DSM 3091 / JCM 11832 / MCB-3).